We begin with the raw amino-acid sequence, 120 residues long: Late cornified envelope-like proline-rich protein 1 (120 aa).

Belongs to the cornifin (SPRR) family.

This chain is Late cornified envelope-like proline-rich protein 1 (Lelp1), found in Mus musculus (Mouse).